Consider the following 309-residue polypeptide: Homoserine O-succinyltransferase (309 aa).

Residue cysteine 142 is the Acyl-thioester intermediate of the active site. Residues lysine 163 and serine 192 each coordinate substrate. Histidine 235 (proton acceptor) is an active-site residue. Glutamate 237 is an active-site residue. Residue arginine 249 coordinates substrate.

It belongs to the MetA family. As to quaternary structure, homodimer.

It localises to the cytoplasm. It catalyses the reaction L-homoserine + succinyl-CoA = O-succinyl-L-homoserine + CoA. The protein operates within amino-acid biosynthesis; L-methionine biosynthesis via de novo pathway; O-succinyl-L-homoserine from L-homoserine: step 1/1. In terms of biological role, transfers a succinyl group from succinyl-CoA to L-homoserine, forming succinyl-L-homoserine. This Escherichia coli O157:H7 protein is Homoserine O-succinyltransferase.